Here is a 218-residue protein sequence, read N- to C-terminus: Adenylate kinase (218 aa).

10–15 (GAGKGT) provides a ligand contact to ATP. The tract at residues 30–59 (STGDMLRAAVKAGTPLGLQAKAVMDAGQLV) is NMP. AMP-binding positions include Thr-31, Arg-36, 57–59 (QLV), 85–88 (GFPR), and Gln-92. The tract at residues 122 to 159 (GRRSHPASGRTYHVKFNPPKVEGKDDVTGEPLVQREDD) is LID. Residues Arg-123 and 132–133 (TY) each bind ATP. Residues 127-150 (PASGRTYHVKFNPPKVEGKDDVTG) form a disordered region. Residues Arg-156 and Arg-167 each coordinate AMP. Position 203 (Gly-203) interacts with ATP.

The protein belongs to the adenylate kinase family. In terms of assembly, monomer.

Its subcellular location is the cytoplasm. The catalysed reaction is AMP + ATP = 2 ADP. The protein operates within purine metabolism; AMP biosynthesis via salvage pathway; AMP from ADP: step 1/1. In terms of biological role, catalyzes the reversible transfer of the terminal phosphate group between ATP and AMP. Plays an important role in cellular energy homeostasis and in adenine nucleotide metabolism. The protein is Adenylate kinase of Acidovorax ebreus (strain TPSY) (Diaphorobacter sp. (strain TPSY)).